Consider the following 368-residue polypeptide: Ribosomal RNA large subunit methyltransferase M (368 aa).

Residues Ser192, 225–228 (APGG), Asp244, Asp264, and Asp281 each bind S-adenosyl-L-methionine. Lys310 acts as the Proton acceptor in catalysis.

This sequence belongs to the class I-like SAM-binding methyltransferase superfamily. RNA methyltransferase RlmE family. RlmM subfamily. Monomer.

It localises to the cytoplasm. It catalyses the reaction cytidine(2498) in 23S rRNA + S-adenosyl-L-methionine = 2'-O-methylcytidine(2498) in 23S rRNA + S-adenosyl-L-homocysteine + H(+). Catalyzes the 2'-O-methylation at nucleotide C2498 in 23S rRNA. The protein is Ribosomal RNA large subunit methyltransferase M of Colwellia psychrerythraea (strain 34H / ATCC BAA-681) (Vibrio psychroerythus).